We begin with the raw amino-acid sequence, 530 residues long: Cytochrome P450 78A6 (530 aa).

The chain crosses the membrane as a helical span at residues 25–45 (LAFSLLAVTIIWLAISLFLWT). Cys-474 is a binding site for heme.

It belongs to the cytochrome P450 family. Heme is required as a cofactor. In terms of tissue distribution, expressed in leaves, sepals, petals, stamens, carpels and developing ovules.

The protein resides in the membrane. Functionally, plays a role in seed and fruit development. Functions probably in association with CYP78A9 in the regulation of seed growth. Acts maternally to promote seed growth. The sequence is that of Cytochrome P450 78A6 (CYP78A6) from Arabidopsis thaliana (Mouse-ear cress).